The chain runs to 505 residues: Cytochrome P450 monooxygenase iliC (505 aa).

Residues 6-26 traverse the membrane as a helical segment; it reads LIAQHSLTLTIASSVLLVFLL. C453 contributes to the heme binding site.

Belongs to the cytochrome P450 family. It depends on heme as a cofactor.

It localises to the membrane. The enzyme catalyses (3E,5S)-3-[(2E,4E,8S,10E,12Z)-1-hydroxy-4,8-dimethyltetradeca-2,4,10,12-tetraen-1-ylidene]-5-[(4-hydroxyphenyl)methyl]pyrrolidine-2,4-dione + reduced [NADPH--hemoprotein reductase] + O2 = 3-[(2E,4E,8S,10E,12Z)-4,8-dimethyltetradeca-2,4,10,12-tetraenoyl]-4-hydroxy-5-(4-hydroxyphenyl)-1,2-dihydropyridin-2-one + oxidized [NADPH--hemoprotein reductase] + 2 H2O. The protein operates within mycotoxin biosynthesis. In terms of biological role, cytochrome P450 monooxygenase; part of the gene cluster that mediates the biosynthesis of ilicicolin H, a 4-hydroxy-2-pyridonealkaloid that has potent and broad antifungal activities by inhibiting the mitochondrial respiration chain. IliC catalyzes the ring expansion of the tetramate intermediate to the acyclic 2-pyridone intermediate that contains the trans bis-diene chain. The biosynthesis of ilicicolin H starts with formation of the tetramic acid by the hybrid PKS-NRPS synthetase iliA with the partnering trans-enoyl reductase iliB since iliA lacks a designated enoylreductase (ER) domain. The cytochrome P450 monooxygenase iliC then catalyzes the ring expansion of the tetramate to the acyclic 2-pyridone. The pericyclase iliD further converts the acyclic 2-pyridone into 8-epi-ilicicolin H. 8-epi-ilicicolin H might then spontaneously convert to ilicicolin H since ilicicolin H is produced in the absence of the epimerase iliE, in contrast to what was observed for the Talaromyces variabilis ilicolin H biosynthetic pathway. The polypeptide is Cytochrome P450 monooxygenase iliC (Neonectria sp. (strain DH2)).